An 882-amino-acid chain; its full sequence is Alanine--tRNA ligase (882 aa).

Zn(2+) contacts are provided by His-568, His-572, Cys-670, and His-674.

The protein belongs to the class-II aminoacyl-tRNA synthetase family. It depends on Zn(2+) as a cofactor.

Its subcellular location is the cytoplasm. It catalyses the reaction tRNA(Ala) + L-alanine + ATP = L-alanyl-tRNA(Ala) + AMP + diphosphate. In terms of biological role, catalyzes the attachment of alanine to tRNA(Ala) in a two-step reaction: alanine is first activated by ATP to form Ala-AMP and then transferred to the acceptor end of tRNA(Ala). Also edits incorrectly charged Ser-tRNA(Ala) and Gly-tRNA(Ala) via its editing domain. In Lactobacillus johnsonii (strain CNCM I-12250 / La1 / NCC 533), this protein is Alanine--tRNA ligase.